We begin with the raw amino-acid sequence, 953 residues long: Coatomer subunit beta (953 aa).

Thr-2 is modified (N-acetylthreonine). 6 HEAT repeats span residues His-96 to Glu-131, Leu-132 to His-168, Ser-240 to Thr-276, Ala-277 to His-314, Arg-316 to Val-353, and Asp-396 to Asn-433. An N6-acetyllysine modification is found at Lys-494.

Oligomeric complex that consists of at least the alpha, beta, beta', gamma, delta, epsilon and zeta subunits. Interacts with ARF1 (myristoylated); this interaction is required for binding of COPB1 to Golgi membranes. Interacts with CAPN8 and PRKCE. Interacts with SCYL1. Interacts with COPG1. Interacts (via trunk domain) with ARF1 (via switch I region); the interaction is direct. Interacts with KCNK2 (via N-terminus); this interaction increases the channel-mediated whole cell currents and promotes plasma membrane expression of KCNK2. Interacts with STX17. Interacts with TMEM115. Interacts with TMEM41B. Proteolytically cleaved between Ser-528 and Ser-529 by CAPN8.

The protein localises to the cytoplasm. Its subcellular location is the cytosol. The protein resides in the golgi apparatus membrane. It localises to the cytoplasmic vesicle. It is found in the COPI-coated vesicle membrane. The protein localises to the cell membrane. Its subcellular location is the endoplasmic reticulum-Golgi intermediate compartment. Functionally, the coatomer is a cytosolic protein complex that binds to dilysine motifs and reversibly associates with Golgi non-clathrin-coated vesicles, which further mediate biosynthetic protein transport from the ER, via the Golgi up to the trans Golgi network. Coatomer complex is required for budding from Golgi membranes, and is essential for the retrograde Golgi-to-ER transport of dilysine-tagged proteins. In mammals, the coatomer can only be recruited by membranes associated to ADP-ribosylation factors (ARFs), which are small GTP-binding proteins; the complex also influences the Golgi structural integrity, as well as the processing, activity, and endocytic recycling of LDL receptors. Involved in the Golgi disassembly and reassembly processes during cell cycle. Plays a functional role in facilitating the transport of kappa-type opioid receptor mRNAs into axons and enhances translation of these proteins. Required for limiting lipid storage in lipid droplets. Involved in lipid homeostasis by regulating the presence of perilipin family members PLIN2 and PLIN3 at the lipid droplet surface and promoting the association of adipocyte surface triglyceride lipase (PNPLA2) with the lipid droplet to mediate lipolysis. Involved in autophagy by playing a role in early endosome function. Plays a role in organellar compartmentalization of secretory compartments including endoplasmic reticulum (ER)-Golgi intermediate compartment (ERGIC), Golgi, trans-Golgi network (TGN) and recycling endosomes, and in biosynthetic transport of CAV1. This chain is Coatomer subunit beta (COPB1), found in Bos taurus (Bovine).